Here is a 1330-residue protein sequence, read N- to C-terminus: G2/mitotic-specific cyclin-B3 (1330 aa).

A disordered region spans residues 1 to 50 (MPLPLPSRSSKPETKKSRSSKIVPSGNNGQSEKRGENYQEKISSSSPRRL). A compositionally biased stretch (polar residues) spans 20-30 (SKIVPSGNNGQ). A D-box motif is present at residues 54-62 (RSAFEDLTN). The interval 1002-1059 (VETSSRVPSTPPESRAGMSSVGKLSTTSKSSVCESSSNKPSSSWGESSQKEMTPLEDI) is disordered. The span at 1026–1048 (STTSKSSVCESSSNKPSSSWGES) shows a compositional bias: low complexity.

This sequence belongs to the cyclin family. Cyclin AB subfamily. As to quaternary structure, interacts with CDK2 kinase. Post-translationally, ubiquitinated. Ubiquitination leads to its degradation during anaphase entry, after degradation of CCNB1.

The protein localises to the nucleus. Functionally, cyclins are positive regulatory subunits of the cyclin-dependent kinases (CDKs), and thereby play an essential role in the control of the cell cycle, notably via their destruction during cell division. Its tissue specificity suggest that it may be required during early meiotic prophase I. This is G2/mitotic-specific cyclin-B3 (CCNB3) from Canis lupus familiaris (Dog).